Here is a 618-residue protein sequence, read N- to C-terminus: UvrABC system protein C (618 aa).

A GIY-YIG domain is found at 20–98 (TAPGVYRMYA…IKSLSPRYNV (79 aa)). The UVR domain occupies 207–242 (DQLGEEIMHSMQQASEALEFERAARLRDLLSSLRSM).

This sequence belongs to the UvrC family. Interacts with UvrB in an incision complex.

The protein resides in the cytoplasm. In terms of biological role, the UvrABC repair system catalyzes the recognition and processing of DNA lesions. UvrC both incises the 5' and 3' sides of the lesion. The N-terminal half is responsible for the 3' incision and the C-terminal half is responsible for the 5' incision. The sequence is that of UvrABC system protein C from Xanthomonas campestris pv. campestris (strain B100).